A 163-amino-acid chain; its full sequence is UPF0262 protein RPE_4483 (163 aa).

The protein belongs to the UPF0262 family.

This chain is UPF0262 protein RPE_4483, found in Rhodopseudomonas palustris (strain BisA53).